The sequence spans 249 residues: Flavodoxin/ferredoxin--NADP reductase (249 aa).

The FAD-binding FR-type domain occupies Asn-2–Asn-102. Residues Arg-51 to Ser-54, Tyr-67, Gln-75 to Thr-77, and Thr-117 contribute to the FAD site. NADP(+)-binding positions include Val-144–Arg-145, Ser-174–Arg-175, Arg-185, and Asn-215–Asp-217. Tyr-248–Trp-249 provides a ligand contact to FAD.

This sequence belongs to the ferredoxin--NADP reductase type 1 family. Requires FAD as cofactor.

It is found in the cytoplasm. It carries out the reaction 2 reduced [2Fe-2S]-[ferredoxin] + NADP(+) + H(+) = 2 oxidized [2Fe-2S]-[ferredoxin] + NADPH. The enzyme catalyses reduced [flavodoxin] + NADP(+) = oxidized [flavodoxin] + NADPH + 2 H(+). In terms of biological role, transports electrons between flavodoxin or ferredoxin and NADPH. In Buchnera aphidicola subsp. Baizongia pistaciae (strain Bp), this protein is Flavodoxin/ferredoxin--NADP reductase (fpr).